The following is a 710-amino-acid chain: Polyribonucleotide nucleotidyltransferase (710 aa).

Residues Asp486 and Asp492 each coordinate Mg(2+). Residues 553–612 enclose the KH domain; the sequence is PRIHTIKISVDKIKDVIGKGGSVIRALTEETGTTIEIEDDGTVKIAATDGDKAKFAIRRI. An S1 motif domain is found at 622–690; the sequence is GRIYNGKVTR…RQGRVRLSIK (69 aa). Residues 690 to 710 are disordered; sequence KEAGEQAQPEAEAVPAAPEAE. A compositionally biased stretch (low complexity) spans 694-710; sequence EQAQPEAEAVPAAPEAE.

This sequence belongs to the polyribonucleotide nucleotidyltransferase family. In terms of assembly, component of the RNA degradosome, which is a multiprotein complex involved in RNA processing and mRNA degradation. It depends on Mg(2+) as a cofactor.

Its subcellular location is the cytoplasm. It carries out the reaction RNA(n+1) + phosphate = RNA(n) + a ribonucleoside 5'-diphosphate. Involved in mRNA degradation. Catalyzes the phosphorolysis of single-stranded polyribonucleotides processively in the 3'- to 5'-direction. The sequence is that of Polyribonucleotide nucleotidyltransferase from Erwinia tasmaniensis (strain DSM 17950 / CFBP 7177 / CIP 109463 / NCPPB 4357 / Et1/99).